A 339-amino-acid polypeptide reads, in one-letter code: Dicamba O-demethylase, oxygenase component (339 aa).

One can recognise a Rieske domain in the interval 8–110; it reads WYVAALPEEL…VVERDALIWI (103 aa). Residues Cys-48, His-50, Cys-67, and His-70 each coordinate [2Fe-2S] cluster. Fe cation-binding residues include His-159 and His-164. Asn-229, His-250, and Trp-284 together coordinate 3,6-dichloro-2-methoxybenzoate. Asp-293 is a binding site for Fe cation.

As to quaternary structure, homotrimer. The dicamba O-demethylase multicomponent enzyme system is composed of an oxygenase component (DdmC) and an electron transfer component formed by a ferredoxin reductase (DdmA) and a ferredoxin (DdmB). In vitro, dicamba O-demethylase assays in which DdmA2 is substituted for DdmA1 demonstrate that the two enzymes possess nearly identical activities. [2Fe-2S] cluster serves as cofactor.

The catalysed reaction is 3,6-dichloro-2-methoxybenzoate + 2 reduced [2Fe-2S]-[ferredoxin] + O2 + 2 H(+) = 3,6-dichlorosalicylate + formaldehyde + 2 oxidized [2Fe-2S]-[ferredoxin] + H2O. Its activity is regulated as follows. Activity enhanced by Fe(2+) and Mg(2+) ions. Functionally, component of the dicamba O-demethylase multicomponent enzyme system involved in the degradation of the herbicide dicamba. In vitro, catalyzes the O-demethylation of 2-methoxy-3,6-dichlorobenzoic acid (dicamba) to yield 3,6-dichlorosalicylic acid (DCSA) via an exocyclic monooxygenation. The sequence is that of Dicamba O-demethylase, oxygenase component from Stenotrophomonas maltophilia (Pseudomonas maltophilia).